The following is a 1174-amino-acid chain: Male determiner protein Mdmd(II) (1174 aa).

A compositionally biased stretch (basic and acidic residues) spans 1 to 15 (MNATDAESRKPENKP). Disordered regions lie at residues 1-51 (MNAT…SGQR), 80-109 (KDGS…HPVE), and 136-259 (KQLS…LRRS). The segment covering 16-35 (SSESSSSGSTSGSSDGEVSS) has biased composition (low complexity). Positions 36 to 47 (KTYFKNNKSKVL) are enriched in polar residues. Positions 80 to 92 (KDGSNEMLPKEDS) are enriched in basic and acidic residues. Positions 93 to 102 (INTNHNYTTD) are enriched in polar residues. Residues 138–153 (LSAYRSRSRSTRLSYS) are compositionally biased toward low complexity. Residues 183 to 200 (HGRDSSTTKRSVSRDKDN) are compositionally biased toward basic and acidic residues. Residues 201–223 (RLRRRIGSSRSHTRSHSRFRRSE) are compositionally biased toward basic residues. Positions 235 to 259 (RSQERRHERRRSMSSDYERIALRRS) are enriched in basic and acidic residues. An MIF4G domain is found at 348–531 (KKYIHGYINK…KVLFQVRRDG (184 aa)). Positions 597-608 (DSDGSFGSGSNS) are enriched in low complexity. A disordered region spans residues 597–616 (DSDGSFGSGSNSETALSDCD). Residues 641–757 (ALRRTIYLTL…SWDVLDCIKL (117 aa)) form the MI domain. Residues 840–857 (SAPSSSSSSSLSSELSAP) show a composition bias toward low complexity. Disordered regions lie at residues 840–1045 (SAPS…SRTK) and 1095–1133 (RKDN…NHSR). Residues 869-909 (KKKHKGKNKKMTKKKNPSKKKEKTKKIVGKNKIAAKNKTIK) are compositionally biased toward basic residues. The segment covering 910 to 924 (RRTDKDNSSSKDNFL) has biased composition (basic and acidic residues). Positions 926–957 (SESSSNESISLDSLSSELFAPSSYSSSESSND) are enriched in low complexity. The segment covering 963–1001 (KHKGKNKKMTKKKNPSNKREKTKKKLSKNKKAPNKNTKK) has biased composition (basic residues). Positions 1010 to 1020 (SSESSISESKS) are enriched in low complexity. Positions 1034 to 1045 (RKKRVTSKSRTK) are enriched in basic residues. Basic and acidic residues predominate over residues 1095–1118 (RKDNYGNRQNHEISQRHDSEIKRR). Over residues 1119-1130 (REERKKRHHEKN) the composition is skewed to basic residues.

It belongs to the CWC22 family. As to quaternary structure, component of the spliceosome C complex.

It is found in the nucleus speckle. In terms of biological role, male determiner protein (M-factor) that controls male somatic sexual differentiation. Acts as a dominant factor that regulates the mRNA splicing of transformer (tra) and doublesex (dsx) transcripts and promotes expression of male splice forms of tra and dsx. Probably acts as a component of the spliceosome C complex required for mRNA splicing factor and exon-junction complex (EJC) assembly. Hinders eIF4AIII from non-specifically binding RNA and escorts it to the splicing machinery to promote EJC assembly on mature mRNAs. This Musca domestica (House fly) protein is Male determiner protein Mdmd(II).